Consider the following 569-residue polypeptide: Urease subunit beta (569 aa).

Residues 131–569 (GGIDTHIHFI…VSLAQLFSIF (439 aa)) enclose the Urease domain. Residues His136, His138, and Lys219 each contribute to the Ni(2+) site. Lys219 bears the N6-carboxylysine mark. His221 is a substrate binding site. His248 and His274 together coordinate Ni(2+). Residue His322 is the Proton donor of the active site. Asp362 is a Ni(2+) binding site.

It belongs to the metallo-dependent hydrolases superfamily. Urease alpha subunit family. In terms of assembly, heterohexamer of 3 UreA (alpha) and 3 UreB (beta) subunits. Requires Ni cation as cofactor. In terms of processing, carboxylation allows a single lysine to coordinate two nickel ions.

It is found in the cytoplasm. It catalyses the reaction urea + 2 H2O + H(+) = hydrogencarbonate + 2 NH4(+). It functions in the pathway nitrogen metabolism; urea degradation; CO(2) and NH(3) from urea (urease route): step 1/1. This chain is Urease subunit beta, found in Helicobacter pylori (strain P12).